The chain runs to 186 residues: MINLVEKEWQEHQKIVQASEILKGQIAKVGELLCECLKKGGKILICGNGGSAADAQHFAAELSGRYKKERKALAGIALTTDTSALSAIGNDYGFEFVFSRQVEALGNEKDVLIGISTSGKSPNVLEALKKAKELNMLCLGLSGKGGGMMNKLCDHNLVVPSDDTARIQEMHILIIHTLCQIIDESF.

Residues 33 to 186 (LCECLKKGGK…TLCQIIDESF (154 aa)) enclose the SIS domain. 48 to 50 (NGG) contacts substrate. Histidine 57 and glutamate 61 together coordinate Zn(2+). Substrate-binding positions include glutamate 61, 90–91 (ND), 116–118 (STS), serine 121, and glutamine 168. Residues glutamine 168 and histidine 176 each contribute to the Zn(2+) site.

It belongs to the SIS family. GmhA subfamily. In terms of assembly, homotetramer. The cofactor is Zn(2+).

Its subcellular location is the cytoplasm. It carries out the reaction 2 D-sedoheptulose 7-phosphate = D-glycero-alpha-D-manno-heptose 7-phosphate + D-glycero-beta-D-manno-heptose 7-phosphate. It functions in the pathway carbohydrate biosynthesis; D-glycero-D-manno-heptose 7-phosphate biosynthesis; D-glycero-alpha-D-manno-heptose 7-phosphate and D-glycero-beta-D-manno-heptose 7-phosphate from sedoheptulose 7-phosphate: step 1/1. Its pathway is bacterial outer membrane biogenesis; LOS core biosynthesis. Its function is as follows. Catalyzes the isomerization of sedoheptulose 7-phosphate in D-glycero-D-manno-heptose 7-phosphate. This Campylobacter jejuni subsp. jejuni serotype O:2 (strain ATCC 700819 / NCTC 11168) protein is Phosphoheptose isomerase 1 (gmhA1).